A 270-amino-acid polypeptide reads, in one-letter code: Regulatory protein RecX (270 aa).

The protein belongs to the RecX family.

It is found in the cytoplasm. Its function is as follows. Modulates RecA activity. The polypeptide is Regulatory protein RecX (Bacillus anthracis (strain A0248)).